We begin with the raw amino-acid sequence, 573 residues long: PCNA-interacting partner (573 aa).

Disordered stretches follow at residues Val470 to Lys505 and Pro531 to Leu560.

It belongs to the PARI family. Interacts with RAD51 and PCNA. Interacts with PARP1. Interacts with TASOR. In terms of tissue distribution, expressed in the ovary, Sertoli cells of the testis and in granular cells within the cerebellum.

Its subcellular location is the cytoplasm. The protein resides in the nucleus. Its function is as follows. Required to suppress inappropriate homologous recombination, thereby playing a central role DNA repair and in the maintenance of genomic stability. Antagonizes homologous recombination by interfering with the formation of the RAD51-DNA homologous recombination structure. Binds single-strand DNA and poly(A) homopolymers. Positively regulate the poly(ADP-ribosyl)ation activity of PARP1; however such function may be indirect. This chain is PCNA-interacting partner (Parpbp), found in Mus musculus (Mouse).